The primary structure comprises 428 residues: Elongation factor 1-alpha (428 aa).

The region spanning 5–217 (KPHVNIVFIG…DQIPEPEKPI (213 aa)) is the tr-type G domain. The interval 14–21 (GHVDHGKS) is G1. Residue 14 to 21 (GHVDHGKS) coordinates GTP. Mg(2+) is bound at residue Ser21. The segment at 68 to 72 (GITID) is G2. Residues 89–92 (DAPG) are G3. GTP-binding positions include 89-93 (DAPGH) and 144-147 (NKMD). The G4 stretch occupies residues 144–147 (NKMD). The segment at 181-183 (SAW) is G5.

The protein belongs to the TRAFAC class translation factor GTPase superfamily. Classic translation factor GTPase family. EF-Tu/EF-1A subfamily.

The protein localises to the cytoplasm. The catalysed reaction is GTP + H2O = GDP + phosphate + H(+). Its function is as follows. GTP hydrolase that promotes the GTP-dependent binding of aminoacyl-tRNA to the A-site of ribosomes during protein biosynthesis. This chain is Elongation factor 1-alpha, found in Pyrococcus horikoshii (strain ATCC 700860 / DSM 12428 / JCM 9974 / NBRC 100139 / OT-3).